A 363-amino-acid chain; its full sequence is Tetraacyldisaccharide 4'-kinase (363 aa).

Residue 78–85 (TVGGNGKT) coordinates ATP.

It belongs to the LpxK family.

It catalyses the reaction a lipid A disaccharide + ATP = a lipid IVA + ADP + H(+). It participates in glycolipid biosynthesis; lipid IV(A) biosynthesis; lipid IV(A) from (3R)-3-hydroxytetradecanoyl-[acyl-carrier-protein] and UDP-N-acetyl-alpha-D-glucosamine: step 6/6. Transfers the gamma-phosphate of ATP to the 4'-position of a tetraacyldisaccharide 1-phosphate intermediate (termed DS-1-P) to form tetraacyldisaccharide 1,4'-bis-phosphate (lipid IVA). The protein is Tetraacyldisaccharide 4'-kinase of Wigglesworthia glossinidia brevipalpis.